Here is a 90-residue protein sequence, read N- to C-terminus: DNA-directed RNA polymerase subunit omega (90 aa).

The segment at 69–90 (RQEQQEQEAAELAAVSSIAHNR) is disordered.

Belongs to the RNA polymerase subunit omega family. In terms of assembly, the RNAP catalytic core consists of 2 alpha, 1 beta, 1 beta' and 1 omega subunit. When a sigma factor is associated with the core the holoenzyme is formed, which can initiate transcription.

The catalysed reaction is RNA(n) + a ribonucleoside 5'-triphosphate = RNA(n+1) + diphosphate. In terms of biological role, promotes RNA polymerase assembly. Latches the N- and C-terminal regions of the beta' subunit thereby facilitating its interaction with the beta and alpha subunits. In Vibrio parahaemolyticus serotype O3:K6 (strain RIMD 2210633), this protein is DNA-directed RNA polymerase subunit omega.